The following is a 448-amino-acid chain: MKGFIDDANYSVGLLDEGTNLGNVIDNYVYEHTLTGKNAFFVGDLGKIVKKHSQWQTVVAQIKPFYTVKCNSTPAVLEILAALGTGFACSSKNEMALVQELGVSPENIIFTSPCKQVSQIKYAAKVGVNIMTCDNEIELKKIARNHPNAKVLLHIATEDNIGGEDGNMKFGTTLKNCRHLLECAKELDVQIIGVKFHVSSACKEYQVYVHALSDARCVFDMAGEFGFTMNMLDIGGGFTGTEIQLEEVNHVISPLLDIYFPEGSGIQIISEPGSYYVSSAFTLAVNIIAKKVVENDKFSSGVEKNGSDEPAFVYYMNDGVYGSFASKLSEDLNTIPEVHKKYKEDEPLFTSSLWGPSCDELDQIVESCLLPELNVGDWLIFDNMGADSFHEPSAFNDFQRPAIYFMMSFSDWYEMQDAGITSDAMMKNFFFAPSCIQLSQEDSFSTEA.

The protein belongs to the Orn/Lys/Arg decarboxylase class-II family. ODC antizyme inhibitor subfamily. As to quaternary structure, monomer. Interacts with OAZ1 and OAZ3; this interaction disrupts the interaction between the antizyme and ODC1. In terms of processing, ubiquitinated, leading to its proteasomal degradation; a process that is reduced in presence of antizyme OAZ1. In terms of tissue distribution, expressed during testis development.

The protein localises to the nucleus. Antizyme inhibitor (AZI) protein that positively regulates ornithine decarboxylase (ODC) activity and polyamine uptake. AZI is an enzymatically inactive ODC homolog that counteracts the negative effect of ODC antizymes (AZs) OAZ1, OAZ2 and OAZ3 on ODC activity by competing with ODC for antizyme-binding. Inhibits antizyme-dependent ODC degradation and releases ODC monomers from their inactive complex with antizymes, leading to formation of the catalytically active ODC homodimer and restoring polyamine production. The chain is Antizyme inhibitor 1 (Azin1) from Mus musculus (Mouse).